The primary structure comprises 614 residues: DBH-like monooxygenase protein 1 homolog (614 aa).

The first 22 residues, 1 to 22, serve as a signal peptide directing secretion; that stretch reads MSENKLFCAIVFLTSLFCSTCS. Residues 23–593 are Lumenal-facing; it reads QGTRFVHSAA…CRKDSAIQCE (571 aa). Positions 37–150 constitute a DOMON domain; the sequence is RRYNIKWGFD…STVRVIWAFH (114 aa). A glycan (N-linked (GlcNAc...) asparagine) is linked at Asn-116. The active site involves Tyr-205. 2 disulfides stabilise this stretch: Cys-207-Cys-259 and Cys-244-Cys-271. Residues His-237 and His-238 each contribute to the Cu cation site. The N-linked (GlcNAc...) asparagine glycan is linked to Asn-249. Residues His-309, His-391, and His-393 each contribute to the Cu cation site. Intrachain disulfides connect Cys-366–Cys-482, Cys-370–Cys-552, and Cys-445–Cys-467. His-391 is an active-site residue. Asn-454 carries an N-linked (GlcNAc...) asparagine glycan. Residue Met-466 coordinates Cu cation. Asn-519 is a glycosylation site (N-linked (GlcNAc...) asparagine). Residues 594–612 form a helical membrane-spanning segment; it reads HSLALLLTACLLLILQTCL.

Belongs to the copper type II ascorbate-dependent monooxygenase family. Requires Cu(2+) as cofactor.

It is found in the endoplasmic reticulum membrane. This Danio rerio (Zebrafish) protein is DBH-like monooxygenase protein 1 homolog (moxd1).